A 310-amino-acid chain; its full sequence is uncharacterized protein (310 aa).

The segment at 1-70 (MAGNSQRRGA…ARGRTDETET (70 aa)) is disordered. Residues 49–62 (AAKRAKAQQRRPAR) are compositionally biased toward basic residues. S-adenosyl-L-methionine-binding residues include Gly262, Val282, and Leu291.

The protein belongs to the class IV-like SAM-binding methyltransferase superfamily. RNA methyltransferase TrmH family.

This is an uncharacterized protein from Mycobacterium ulcerans (strain Agy99).